The sequence spans 375 residues: Succinyl-diaminopimelate desuccinylase (375 aa).

Histidine 66 contributes to the Zn(2+) binding site. The active site involves aspartate 68. Aspartate 99 serves as a coordination point for Zn(2+). The active-site Proton acceptor is the glutamate 133. Residues glutamate 134, glutamate 162, and histidine 348 each coordinate Zn(2+).

The protein belongs to the peptidase M20A family. DapE subfamily. In terms of assembly, homodimer. Zn(2+) serves as cofactor. Co(2+) is required as a cofactor.

It carries out the reaction N-succinyl-(2S,6S)-2,6-diaminopimelate + H2O = (2S,6S)-2,6-diaminopimelate + succinate. It functions in the pathway amino-acid biosynthesis; L-lysine biosynthesis via DAP pathway; LL-2,6-diaminopimelate from (S)-tetrahydrodipicolinate (succinylase route): step 3/3. In terms of biological role, catalyzes the hydrolysis of N-succinyl-L,L-diaminopimelic acid (SDAP), forming succinate and LL-2,6-diaminopimelate (DAP), an intermediate involved in the bacterial biosynthesis of lysine and meso-diaminopimelic acid, an essential component of bacterial cell walls. The chain is Succinyl-diaminopimelate desuccinylase from Escherichia coli (strain SE11).